The sequence spans 275 residues: 3-methyl-2-oxobutanoate hydroxymethyltransferase (275 aa).

Mg(2+) contacts are provided by Asp49 and Asp88. 3-methyl-2-oxobutanoate contacts are provided by residues 49 to 50, Asp88, and Lys118; that span reads DS. Glu120 contacts Mg(2+). Catalysis depends on Glu187, which acts as the Proton acceptor.

Belongs to the PanB family. In terms of assembly, homodecamer; pentamer of dimers. Requires Mg(2+) as cofactor.

Its subcellular location is the cytoplasm. It catalyses the reaction 3-methyl-2-oxobutanoate + (6R)-5,10-methylene-5,6,7,8-tetrahydrofolate + H2O = 2-dehydropantoate + (6S)-5,6,7,8-tetrahydrofolate. The protein operates within cofactor biosynthesis; (R)-pantothenate biosynthesis; (R)-pantoate from 3-methyl-2-oxobutanoate: step 1/2. In terms of biological role, catalyzes the reversible reaction in which hydroxymethyl group from 5,10-methylenetetrahydrofolate is transferred onto alpha-ketoisovalerate to form ketopantoate. In Bordetella petrii (strain ATCC BAA-461 / DSM 12804 / CCUG 43448), this protein is 3-methyl-2-oxobutanoate hydroxymethyltransferase.